The following is a 266-amino-acid chain: Cytosolic Fe-S cluster assembly factor Nubp2 homolog (266 aa).

14–21 contributes to the ATP binding site; that stretch reads GKGGVGKS. Residues Cys-188 and Cys-191 each coordinate [4Fe-4S] cluster.

Belongs to the Mrp/NBP35 ATP-binding proteins family. Nubp2/CFD1 subfamily. As to quaternary structure, heterotetramer of 2 Nubp1 and 2 Nubp2 chains. Requires [4Fe-4S] cluster as cofactor.

It is found in the cytoplasm. Its function is as follows. Component of the cytosolic iron-sulfur (Fe/S) protein assembly (CIA) machinery. Required for maturation of extramitochondrial Fe-S proteins. The Nubp1-Nubp2 heterotetramer forms a Fe-S scaffold complex, mediating the de novo assembly of an Fe-S cluster and its transfer to target apoproteins. In Drosophila virilis (Fruit fly), this protein is Cytosolic Fe-S cluster assembly factor Nubp2 homolog.